The primary structure comprises 859 residues: Probable potassium transporter 14 (859 aa).

A compositionally biased stretch (gly residues) spans 1–19; that stretch reads METRSGGSGSASGGGGGGR. The segment at 1-69 is disordered; sequence METRSGGSGS…SRGGCSDSDD (69 aa). The Cytoplasmic portion of the chain corresponds to 1–112; that stretch reads METRSGGSGS…RHQEITVGRS (112 aa). Residues 54–65 show a composition bias toward low complexity; it reads PAAASGSRGGCS. A helical transmembrane segment spans residues 113 to 133; that stretch reads IVLAVQTLGVVFGDVGTSPLY. Over 134–155 the chain is Extracellular; that stretch reads AFDVMFNKYPITSKEDVLGALS. The helical transmembrane segment at 156–176 threads the bilayer; sequence LVIYTLILIPLLKYTLIALWG. The Cytoplasmic portion of the chain corresponds to 177-240; the sequence is NDDGEGGTFA…RLETSSMLKK (64 aa). A helical transmembrane segment spans residues 241–261; it reads LLLMLVLFGTSMVIADGVVTP. At 262 to 275 the chain is on the extracellular side; the sequence is AMSVMSAVNGLKVG. Residues 276-296 form a helical membrane-spanning segment; it reads ISSVNEGEVVMITVAVLIVLF. The Cytoplasmic segment spans residues 297–305; it reads TLQRFGSSK. Residues 306-326 traverse the membrane as a helical segment; the sequence is VALAVGPALFIWFCCLAGIGI. Residues 327-359 lie on the Extracellular side of the membrane; sequence YNMKTYGSAVLQAFNPMYIYYYFERNPTQAWMS. The chain crosses the membrane as a helical span at residues 360–380; the sequence is LGGCLLCATGSEAMFADLCYF. At 381–388 the chain is on the cytoplasmic side; sequence SVKSVQLT. The chain crosses the membrane as a helical span at residues 389–409; it reads FVFLVLPCLLLGYLGQAAFLM. Over 410 to 417 the chain is Extracellular; that stretch reads ENLTENQQ. N411 carries N-linked (GlcNAc...) asparagine glycosylation. Residues 418–438 form a helical membrane-spanning segment; that stretch reads VFFLSIPNQAFWPVVFIAILA. Residues 439 to 478 lie on the Cytoplasmic side of the membrane; that stretch reads AIIASRTMTTAIFSTIKQATALGCFPRLKIIHTSRSFMGQ. The helical transmembrane segment at 479 to 499 threads the bilayer; sequence IYIPMMNWFLLVSCLAFVTMF. Residues 500–508 are Extracellular-facing; it reads GSINEIGNA. Residues 509 to 531 traverse the membrane as a helical segment; sequence YGIAELGVMMMTTVLVTIIMLLI. Topologically, residues 532–535 are cytoplasmic; it reads WQIN. Residues 536–558 traverse the membrane as a helical segment; sequence IIVVLCFLTLSLGLELIFFSSVL. The Extracellular portion of the chain corresponds to 559–560; it reads GS. Residues 561–581 form a helical membrane-spanning segment; that stretch reads VADGSWVLLVFAAVLYLIMYI. At 582–859 the chain is on the cytoplasmic side; it reads WNYGTKLKYE…MMQVAMQYMV (278 aa). The disordered stretch occupies residues 752-772; sequence GVPPAEAAGTTEHPTIGSSMS. Residues 763–772 are compositionally biased toward polar residues; the sequence is EHPTIGSSMS.

This sequence belongs to the HAK/KUP transporter (TC 2.A.72.3) family.

It is found in the membrane. In terms of biological role, high-affinity potassium transporter. In Oryza sativa subsp. japonica (Rice), this protein is Probable potassium transporter 14 (HAK14).